Consider the following 409-residue polypeptide: Arginine deiminase (409 aa).

C399 (amidino-cysteine intermediate) is an active-site residue.

The protein belongs to the arginine deiminase family.

It is found in the cytoplasm. The catalysed reaction is L-arginine + H2O = L-citrulline + NH4(+). Its pathway is amino-acid degradation; L-arginine degradation via ADI pathway; carbamoyl phosphate from L-arginine: step 1/2. This Streptococcus pneumoniae serotype 19F (strain G54) protein is Arginine deiminase.